Consider the following 359-residue polypeptide: 3-dehydroquinate synthase (359 aa).

NAD(+)-binding positions include 71 to 76, 105 to 109, 129 to 130, Lys-142, Lys-151, and 169 to 172; these read DGEQFK, GVIGD, TT, and CLQT. Residues Glu-184, His-247, and His-264 each coordinate Zn(2+).

Belongs to the sugar phosphate cyclases superfamily. Dehydroquinate synthase family. The cofactor is NAD(+). Co(2+) is required as a cofactor. It depends on Zn(2+) as a cofactor.

The protein resides in the cytoplasm. It carries out the reaction 7-phospho-2-dehydro-3-deoxy-D-arabino-heptonate = 3-dehydroquinate + phosphate. The protein operates within metabolic intermediate biosynthesis; chorismate biosynthesis; chorismate from D-erythrose 4-phosphate and phosphoenolpyruvate: step 2/7. Its function is as follows. Catalyzes the conversion of 3-deoxy-D-arabino-heptulosonate 7-phosphate (DAHP) to dehydroquinate (DHQ). The sequence is that of 3-dehydroquinate synthase from Shewanella oneidensis (strain ATCC 700550 / JCM 31522 / CIP 106686 / LMG 19005 / NCIMB 14063 / MR-1).